Consider the following 88-residue polypeptide: Small ribosomal subunit protein bS16 (88 aa).

It belongs to the bacterial ribosomal protein bS16 family.

This chain is Small ribosomal subunit protein bS16, found in Thermus aquaticus.